Here is a 463-residue protein sequence, read N- to C-terminus: Immune-associated nucleotide-binding protein 10 (463 aa).

The region spanning 3–211 is the AIG1-type G domain; sequence EPIKNIVLVG…YTYQLHRKIK (209 aa). Positions 12–19 are G1; sequence GRTGNGKS. GTP contacts are provided by residues 12-20 and Ser33; that span reads GRTGNGKSS. Positions 39–43 are G2; it reads GVTMI. Positions 61-64 are G3; it reads DTPG. Residues 131 to 134 form a G4 region; sequence TGGD. A G5 region spans residues 170 to 172; it reads DNK. Asn171 lines the GTP pocket. Residues 173–308 are a coiled coil; the sequence is SKDEKKKVEQ…KQLIAQANRM (136 aa).

Belongs to the TRAFAC class TrmE-Era-EngA-EngB-Septin-like GTPase superfamily. AIG1/Toc34/Toc159-like paraseptin GTPase family. IAN subfamily. Expressed in radicles of the germinating seeds.

This is Immune-associated nucleotide-binding protein 10 from Arabidopsis thaliana (Mouse-ear cress).